The primary structure comprises 598 residues: F-box/WD repeat-containing protein 8 (598 aa).

The residue at position 1 (methionine 1) is an N-acetylmethionine. Residues serine 20–proline 97 form a disordered region. Residues leucine 29 to alanine 44 show a composition bias toward basic and acidic residues. The span at glycine 51–arginine 65 shows a compositional bias: low complexity. Residues arginine 73–threonine 93 are compositionally biased toward basic and acidic residues. Residue serine 84 is modified to Phosphoserine. Serine 86 bears the Phosphoserine; by MTOR mark. The F-box domain maps to proline 113–leucine 159. WD repeat units lie at residues alanine 201–glutamate 250, glutamine 259–aspartate 299, alanine 300–glutamate 340, valine 341–valine 383, tyrosine 384–glycine 429, asparagine 430–glutamine 475, leucine 476–serine 513, and arginine 514–phenylalanine 561.

Component of the Cul7-RING(FBXW8) complex consisting of CUL7, RBX1, SKP1 and FBXW8; within the complex interacts with CUL7 and SKP1. Interacts with GLMN isoform 1. Interacts with OBSL1, CUL1, CUL2, CCT6B, PFDN5, CCT2, CCT3, CCT6A, CCT7, VBP1, CCDC8, ARF1, TRIP13, PDCD5 and GORASP1. Interacts with MAP4K1/HPK1 (when autophosphorylated). Associated component of the 3M complex. Interacts with POUF51 (when phosphorylated on 'Ser-347'). In terms of processing, phosphorylation at Ser-86 by mTORC2 promotes FBXW8 stabilization, allowing its translocation to the cytosol in response to insulin. As to expression, widely expressed. Expressed at higher level in skeletal muscle, cartilage and lung.

The protein resides in the cytoplasm. It localises to the perinuclear region. The protein localises to the golgi apparatus. Its subcellular location is the cytosol. It participates in protein modification; protein ubiquitination. In terms of biological role, substrate-recognition component of the Cul7-RING(FBXW8) ubiquitin ligase complex, which mediates the ubiquitination and subsequent proteasomal degradation of target proteins. The Cul7-RING(FBXW8) complex mediates ubiquitination and consequent degradation of GORASP1, acting as a component of the ubiquitin ligase pathway that regulates Golgi morphogenesis and dendrite patterning in brain. Mediates ubiquitination and degradation of IRS1 in a mTOR-dependent manner: the Cul7-RING(FBXW8) complex recognizes and binds IRS1 previously phosphorylated by S6 kinase (RPS6KB1 or RPS6KB2). The Cul7-RING(FBXW8) complex also mediates ubiquitination of MAP4K1/HPK1: recognizes and binds autophosphorylated MAP4K1/HPK1, leading to its degradation, thereby affecting cell proliferation and differentiation. The Cul7-RING(FBXW8) complex also mediates ubiquitination of phosphorylated cyclin-D1 (CCND1). The Cul7-RING(FBXW8) complex is however not a major regulator of CCND1 stability during the G1/S transition. Associated component of the 3M complex, suggesting that it mediates some of 3M complex functions. The protein is F-box/WD repeat-containing protein 8 (Fbxw8) of Mus musculus (Mouse).